Here is a 186-residue protein sequence, read N- to C-terminus: ATP-dependent protease subunit HslV (186 aa).

The active site involves Thr-14. Ala-168, Cys-171, and Thr-174 together coordinate Na(+).

It belongs to the peptidase T1B family. HslV subfamily. A double ring-shaped homohexamer of HslV is capped on each side by a ring-shaped HslU homohexamer. The assembly of the HslU/HslV complex is dependent on binding of ATP.

It localises to the cytoplasm. It catalyses the reaction ATP-dependent cleavage of peptide bonds with broad specificity.. Its activity is regulated as follows. Allosterically activated by HslU binding. Protease subunit of a proteasome-like degradation complex believed to be a general protein degrading machinery. The protein is ATP-dependent protease subunit HslV of Bradyrhizobium sp. (strain BTAi1 / ATCC BAA-1182).